A 457-amino-acid chain; its full sequence is D-inositol 3-phosphate glycosyltransferase (457 aa).

Histidine 34 is a 1D-myo-inositol 3-phosphate binding site. Residues 40–41 (QP) and glycine 48 contribute to the UDP-N-acetyl-alpha-D-glucosamine site. 1D-myo-inositol 3-phosphate is bound by residues 45–50 (DAGGMN), lysine 103, tyrosine 136, threonine 160, and arginine 180. Residues arginine 267, lysine 272, and valine 333 each coordinate UDP-N-acetyl-alpha-D-glucosamine. Positions 342, 343, and 345 each coordinate Mg(2+). UDP-N-acetyl-alpha-D-glucosamine-binding residues include glutamate 355 and glutamate 363. Threonine 369 contacts Mg(2+).

Belongs to the glycosyltransferase group 1 family. MshA subfamily. Homodimer.

The catalysed reaction is 1D-myo-inositol 3-phosphate + UDP-N-acetyl-alpha-D-glucosamine = 1D-myo-inositol 2-acetamido-2-deoxy-alpha-D-glucopyranoside 3-phosphate + UDP + H(+). Functionally, catalyzes the transfer of a N-acetyl-glucosamine moiety to 1D-myo-inositol 3-phosphate to produce 1D-myo-inositol 2-acetamido-2-deoxy-glucopyranoside 3-phosphate in the mycothiol biosynthesis pathway. The chain is D-inositol 3-phosphate glycosyltransferase from Streptomyces coelicolor (strain ATCC BAA-471 / A3(2) / M145).